Reading from the N-terminus, the 236-residue chain is ATP synthase subunit a, chloroplastic (236 aa).

Transmembrane regions (helical) follow at residues 25–45 (MHGQ…AFAV), 87–107 (FIGT…LIPW), 123–143 (DINT…YAGL), 180–202 (LFGN…PLVI), and 210–230 (GLFT…AYIG).

Belongs to the ATPase A chain family. F-type ATPases have 2 components, CF(1) - the catalytic core - and CF(0) - the membrane proton channel. CF(1) has five subunits: alpha(3), beta(3), gamma(1), delta(1), epsilon(1). CF(0) has four main subunits: a, b, b' and c.

It is found in the plastid. It localises to the chloroplast thylakoid membrane. Functionally, key component of the proton channel; it plays a direct role in the translocation of protons across the membrane. This chain is ATP synthase subunit a, chloroplastic, found in Ostreococcus tauri.